The primary structure comprises 337 residues: Undecaprenyl-phosphate 4-deoxy-4-formamido-L-arabinose transferase (337 aa).

Helical transmembrane passes span 235 to 255 (LSIIGFSMALLGVLFAALLII) and 270 to 290 (FVLFAVLFVFTGGQFIGMGLL).

It belongs to the glycosyltransferase 2 family.

The protein localises to the cell inner membrane. It carries out the reaction UDP-4-deoxy-4-formamido-beta-L-arabinose + di-trans,octa-cis-undecaprenyl phosphate = 4-deoxy-4-formamido-alpha-L-arabinopyranosyl di-trans,octa-cis-undecaprenyl phosphate + UDP. It functions in the pathway glycolipid biosynthesis; 4-amino-4-deoxy-alpha-L-arabinose undecaprenyl phosphate biosynthesis; 4-amino-4-deoxy-alpha-L-arabinose undecaprenyl phosphate from UDP-4-deoxy-4-formamido-beta-L-arabinose and undecaprenyl phosphate: step 1/2. The protein operates within bacterial outer membrane biogenesis; lipopolysaccharide biosynthesis. In terms of biological role, catalyzes the transfer of 4-deoxy-4-formamido-L-arabinose from UDP to undecaprenyl phosphate. The modified arabinose is attached to lipid A and is required for resistance to polymyxin and cationic antimicrobial peptides. In Pseudomonas savastanoi pv. phaseolicola (strain 1448A / Race 6) (Pseudomonas syringae pv. phaseolicola (strain 1448A / Race 6)), this protein is Undecaprenyl-phosphate 4-deoxy-4-formamido-L-arabinose transferase.